The following is a 490-amino-acid chain: GTPase Der (490 aa).

One can recognise an EngA-type G 1 domain in the interval 1–165 (MRIAILGRPN…RIRQVAEIPL (165 aa)). GTP contacts are provided by residues 7 to 14 (GRPNVGKS), 54 to 58 (DTGGV), and 117 to 120 (NKAD). The segment at 165 to 184 (LPSAEEQENTQEEEFSSKES) is disordered. The span at 169 to 178 (EEQENTQEEE) shows a compositional bias: acidic residues. The EngA-type G 2 domain maps to 227 to 400 (LKVALIGHPN…AVDDVYTIAT (174 aa)). GTP contacts are provided by residues 233-240 (GHPNVGKS), 280-284 (DTAGL), and 345-348 (NKWD). Residues 401-485 (TKLSTSLVNK…PFDLEYKAKP (85 aa)) enclose the KH-like domain.

The protein belongs to the TRAFAC class TrmE-Era-EngA-EngB-Septin-like GTPase superfamily. EngA (Der) GTPase family. As to quaternary structure, associates with the 50S ribosomal subunit.

Its function is as follows. GTPase that plays an essential role in the late steps of ribosome biogenesis. This Chlamydia muridarum (strain MoPn / Nigg) protein is GTPase Der.